Here is a 305-residue protein sequence, read N- to C-terminus: Nucleotide-binding protein Mpe_A3336 (305 aa).

Glycine 22–serine 29 lines the ATP pocket. Aspartate 74–serine 77 contacts GTP.

This sequence belongs to the RapZ-like family.

Displays ATPase and GTPase activities. This chain is Nucleotide-binding protein Mpe_A3336, found in Methylibium petroleiphilum (strain ATCC BAA-1232 / LMG 22953 / PM1).